A 256-amino-acid chain; its full sequence is Protein CC2D2B homolog (256 aa).

The segment at 1–24 is disordered; that stretch reads MSEEMDNVTAEEITDKHLQKDLDA. The segment covering 13–22 has biased composition (basic and acidic residues); the sequence is ITDKHLQKDL. Coiled coils occupy residues 136 to 159 and 194 to 214; these read DLLKVKAADYEDDQEQIKKQKANI and EIYKKTCNKMENRLLKLEEGK.

The protein is Protein CC2D2B homolog of Macaca fascicularis (Crab-eating macaque).